The primary structure comprises 177 residues: Interleukin-25 (177 aa).

The signal sequence occupies residues 1–32; that stretch reads MRERPRLGEDSSLISLFLQVVAFLAMVMGTHT. The interval 58–81 is disordered; sequence PVPPLEPARPNRHPESCRASEDGP. A compositionally biased stretch (basic and acidic residues) spans 69–78; it reads RHPESCRASE. 2 cysteine pairs are disulfide-bonded: C110-C168 and C115-C170. Residue N136 is glycosylated (N-linked (GlcNAc...) asparagine).

This sequence belongs to the IL-17 family. As to expression, expressed at low levels in several tissues, including brain, kidney, lung, prostate, testis, spinal cord, adrenal gland, and trachea.

The protein localises to the secreted. In terms of biological role, cytokine produced by various cells such as eosinophils, T-helper type 2 (Th2) cells or epithelial cells that plays a role in internal safety of adaptive immune responses by regulating cytokine production. Promotes and augments T-helper type 2 responses locally or systemically. Exerts its activity via its receptor composed of IL17RA and IL17RB for signal transduction. In turn, stimulates the JAK2-STAT5A pathway and promotes the secretion of type-2 associated cytokines including IL4, IL9 and IL13. Also induces the release of IL8, and IL6 from eosinophils through the combined activation of MAPK and NF-kappa-B pathways. Inhibits the differentiation of T-helper (Th17) cells via the production of IL4, IL5 and IL13. In Homo sapiens (Human), this protein is Interleukin-25 (IL25).